The sequence spans 183 residues: ATP-dependent protease subunit HslV (183 aa).

Threonine 7 is a catalytic residue. Residues glycine 162, cysteine 165, and threonine 168 each contribute to the Na(+) site.

It belongs to the peptidase T1B family. HslV subfamily. In terms of assembly, a double ring-shaped homohexamer of HslV is capped on each side by a ring-shaped HslU homohexamer. The assembly of the HslU/HslV complex is dependent on binding of ATP.

Its subcellular location is the cytoplasm. It carries out the reaction ATP-dependent cleavage of peptide bonds with broad specificity.. With respect to regulation, allosterically activated by HslU binding. Functionally, protease subunit of a proteasome-like degradation complex believed to be a general protein degrading machinery. This is ATP-dependent protease subunit HslV from Alkalilimnicola ehrlichii (strain ATCC BAA-1101 / DSM 17681 / MLHE-1).